Consider the following 611-residue polypeptide: Serine/arginine repetitive matrix protein 4 (611 aa).

Disordered regions lie at residues 38–248 and 263–611; these read ARKP…PLQM and SAAD…STRR. 2 stretches are compositionally biased toward basic residues: residues 107 to 123 and 131 to 189; these read RGKK…RRRS and VKKK…HRCP. Residues 190–202 show a composition bias toward low complexity; that stretch reads SRSQSSESRPSSC. Residues 203–216 show a composition bias toward basic and acidic residues; that stretch reads ESRHRGRSPEEGQK. Residues 217 to 226 show a composition bias toward basic residues; the sequence is SRRRHSRRCS. Positions 270–290 are enriched in polar residues; sequence KTASPLTTSRGRSQEYDSGND. Positions 291 to 301 are enriched in low complexity; sequence TSSPPSTQTSS. Residues 322 to 341 are compositionally biased toward polar residues; it reads LNSGNTSDSGNSFTTSSPQN. 2 stretches are compositionally biased toward low complexity: residues 390-422 and 430-461; these read SRSS…SRST and SRSP…SRYS. A compositionally biased stretch (basic and acidic residues) spans 462–482; sequence PSRERDPKYSEKDSQQRERER. Residues 483–498 show a composition bias toward basic residues; sequence ARRRRRSYSPMRKRRR. A compositionally biased stretch (basic and acidic residues) spans 499–508; that stretch reads DSPSHLEARR. Over residues 522-549 the composition is skewed to low complexity; that stretch reads PSPSSSGSLSSTSSWYSSSSSRSASRSY. Residues 550–564 show a composition bias toward basic residues; sequence SRSRSRSRSRRRSRT. Over residues 565 to 580 the composition is skewed to low complexity; it reads RTSSSSSSRSPSPGSR. The span at 581–595 shows a compositional bias: basic residues; that stretch reads SRSRSRSRSRSRSRS. Residues 596–611 show a composition bias toward low complexity; it reads QSRSYSSADSYSSTRR.

This sequence belongs to the nSR100 family. In terms of processing, phosphorylated. As to expression, specifically expressed in neuronal cells (at protein level). Expressed in the cerebellum.

It is found in the nucleus. In terms of biological role, splicing factor specifically required for neural cell differentiation. Acts in conjunction with nPTB/PTBP2 by binding directly to its regulated target transcripts and promotes neural-specific exon inclusion in many genes that function in neural cell differentiation. Required to promote the inclusion of neural-specific exon 10 in nPTB/PTBP2, leading to increased expression of neural-specific nPTB/PTBP2. Also promotes the inclusion of exon 16 in DAAM1 in neuron extracts. Promotes alternative splicing of REST transcripts to produce REST isoform 3 (REST4) with greatly reduced repressive activity, thereby activating expression of REST targets in neural cells. Plays an important role during embryonic development as well as in the proper functioning of the adult nervous system. Regulates alternative splicing events in genes with important neuronal functions. This Homo sapiens (Human) protein is Serine/arginine repetitive matrix protein 4 (SRRM4).